We begin with the raw amino-acid sequence, 430 residues long: Solanesyl-diphosphate synthase 1, mitochondrial (430 aa).

Residues 1–31 constitute a mitochondrion transit peptide; it reads MSWRWALARRVAALGATSGGGDGATAQAQRL. Positions 133, 136, and 182 each coordinate isopentenyl diphosphate. Asp-189 and Asp-193 together coordinate Mg(2+). An all-trans-polyprenyl diphosphate is bound at residue Arg-198. An isopentenyl diphosphate-binding site is contributed by Arg-199. An all-trans-polyprenyl diphosphate is bound by residues Lys-275, Thr-276, Gln-313, and Lys-330.

This sequence belongs to the FPP/GGPP synthase family. Homodimer. It depends on Mg(2+) as a cofactor. As to expression, expressed in leaves, stems and roots. Highest expression in roots.

Its subcellular location is the mitochondrion. The enzyme catalyses 7 isopentenyl diphosphate + (2E)-geranyl diphosphate = all-trans-nonaprenyl diphosphate + 7 diphosphate. It functions in the pathway cofactor biosynthesis; ubiquinone biosynthesis. Involved in the supply of solanesyl diphosphate for ubiquinone-9 (UQ-9) biosynthesis in mitochondria. Farnesyl diphosphate is the preferred substrate. This is Solanesyl-diphosphate synthase 1, mitochondrial from Oryza sativa subsp. japonica (Rice).